The following is a 481-amino-acid chain: tRNA-guanine(15) transglycosylase (481 aa).

Asp87 serves as the catalytic Nucleophile. Substrate-binding residues include Asp122 and Ala191. Residues Cys273, Cys275, and Cys278 each contribute to the Zn(2+) site.

It belongs to the archaeosine tRNA-ribosyltransferase family. It depends on Zn(2+) as a cofactor.

The enzyme catalyses guanosine(15) in tRNA + 7-cyano-7-deazaguanine = 7-cyano-7-carbaguanosine(15) in tRNA + guanine. It participates in tRNA modification; archaeosine-tRNA biosynthesis. Its function is as follows. Exchanges the guanine residue with 7-cyano-7-deazaguanine (preQ0) at position 15 in the dihydrouridine loop (D-loop) of archaeal tRNAs. In Archaeoglobus fulgidus (strain ATCC 49558 / DSM 4304 / JCM 9628 / NBRC 100126 / VC-16), this protein is tRNA-guanine(15) transglycosylase.